Here is a 447-residue protein sequence, read N- to C-terminus: MIGRIVQILGSIVDVEFKKNNIPYIYNALFIKEFNLYLEVQQQIGNNIVRTIALGSTYGLKRYLLVIDTKKPILTPVGNCTLGRILNVLGNPIDNNGEIISNKKKPIHCSPPKFSDQVFSNNILETGIKVIDLLCPFLRGGKIGLFGGAGVGKTINMMELIRNIAIEHKGCSVFIGVGERTREGNDFYYEMKESNVLDKVSLIYGQMNEPSGNRLRVALTGLSIAEEFREMGKDVLLFIDNIYRFTLAGTEISALLGRMPSAVGYQPTLAEEMGKLQERISSTKNGSITSVQAIYVPADDLTDPSPSTTFTHLDSTIVLSRQIAELGIYPAIDPLESYSKQLDPYIVGIEHYEIANSVKFYLQKYKELKDTIAILGMDELSENDQIIVKRARKLQRFFSQPFFVGEIFTGIKGEYVNIKDTIQCFKNILNGEFDNINEKNFYMIGKI.

Residue 147–154 (GGAGVGKT) coordinates ATP.

This sequence belongs to the ATPase alpha/beta chains family. F-type ATPases have 2 components, CF(1) - the catalytic core - and CF(0) - the membrane proton channel. CF(1) has five subunits: alpha(3), beta(3), gamma(1), delta(1), epsilon(1). CF(0) has three main subunits: a(1), b(2) and c(9-12). The alpha and beta chains form an alternating ring which encloses part of the gamma chain. CF(1) is attached to CF(0) by a central stalk formed by the gamma and epsilon chains, while a peripheral stalk is formed by the delta and b chains.

Its subcellular location is the cell membrane. It catalyses the reaction ATP + H2O + 4 H(+)(in) = ADP + phosphate + 5 H(+)(out). Functionally, produces ATP from ADP in the presence of a proton gradient across the membrane. The catalytic sites are hosted primarily by the beta subunits. The sequence is that of ATP synthase subunit beta from Carsonella ruddii (strain PV).